A 368-amino-acid polypeptide reads, in one-letter code: Protein HGH1 homolog (368 aa).

The protein belongs to the HGH1 family.

In Drosophila pseudoobscura pseudoobscura (Fruit fly), this protein is Protein HGH1 homolog.